Consider the following 196-residue polypeptide: MLARGPWTWKYALPPAVVGVAALAASSPWGVVGVALAAFVVWFHRDPDRSPNGAGVVVPADGTVSVIRTRDDGRVRVGVFMNVHNVHVNRVPVAGRVESVVHEPGGHRPAFSKESAHNERVRIETAEWTVVLIAGAFARRIHPYVEAGEDLARGDRLGHISFGSRADVVLPPAYDRGDVVVESGQTVRAGETVLAR.

Catalysis depends on serine 164, which acts as the Schiff-base intermediate with substrate; via pyruvic acid. Serine 164 carries the pyruvic acid (Ser); by autocatalysis modification.

It belongs to the phosphatidylserine decarboxylase family. PSD-A subfamily. In terms of assembly, heterodimer of a large membrane-associated beta subunit and a small pyruvoyl-containing alpha subunit. The cofactor is pyruvate. In terms of processing, is synthesized initially as an inactive proenzyme. Formation of the active enzyme involves a self-maturation process in which the active site pyruvoyl group is generated from an internal serine residue via an autocatalytic post-translational modification. Two non-identical subunits are generated from the proenzyme in this reaction, and the pyruvate is formed at the N-terminus of the alpha chain, which is derived from the carboxyl end of the proenzyme. The post-translation cleavage follows an unusual pathway, termed non-hydrolytic serinolysis, in which the side chain hydroxyl group of the serine supplies its oxygen atom to form the C-terminus of the beta chain, while the remainder of the serine residue undergoes an oxidative deamination to produce ammonia and the pyruvoyl prosthetic group on the alpha chain.

It localises to the cell membrane. The catalysed reaction is archaetidylserine + H(+) = archaetidylethanolamine + CO2. In terms of biological role, catalyzes the formation of archaetidylethanolamine (PtdEtn) from archaetidylserine (PtdSer). The protein is Putative archaetidylserine decarboxylase proenzyme of Halobacterium salinarum (strain ATCC 700922 / JCM 11081 / NRC-1) (Halobacterium halobium).